The primary structure comprises 326 residues: Polycomb complex protein BMI-1 (326 aa).

The RING-type zinc finger occupies 18–57 (CVLCGGYFIDATTIIECLHSFCKTCIVRYLETSKYCPICD). Positions 81 to 95 (KLVPGLFKNEMKRRR) match the Nuclear localization signal motif. The tract at residues 162–182 (RYLRCPAAMTVMHLRKFLRSK) is interaction with PHC2. The interaction with E4F1 stretch occupies residues 164 to 228 (LRCPAAMTVM…GPLPLKYRVR (65 aa)). The segment at 236–326 (ISHQRDGLTN…VNGSSATSSG (91 aa)) is disordered. Low complexity-rich tracts occupy residues 266–278 (PSTSSCLPSPSTP), 290–303 (SSTMNGTSSSPSGN), and 315–326 (SSVNGSSATSSG).

In terms of assembly, component of a PRC1-like complex. Identified in a PRC1-like HPRC-H complex with CBX2, CBX4, CBX8, PHC1, PHC2, PHC3 RING1 and RNF2. Interacts with RNF2/RING2. Interacts with RING1. Part of a complex that contains RNF2, UB2D3 and BMI1, where RNF2 and BMI1 form a tight heterodimer, and UB2D3 interacts only with RNF2. The complex composed of RNF2, UB2D3 and BMI1 binds nucleosomes, and has activity only with nucleosomal histone H2A. Interacts with CBX7 and CBX8. Interacts with SPOP. Part of a complex consisting of BMI1, CUL3 and SPOP. Interacts with E4F1. Interacts with PHC2. Interacts with zinc finger protein ZNF277. May be part of a complex including at least ZNF277, BMI1 and RNF2/RING2. In terms of processing, may be polyubiquitinated; which does not lead to proteasomal degradation. Monoubiquitinated.

It localises to the nucleus. The protein localises to the cytoplasm. Component of a Polycomb group (PcG) multiprotein PRC1-like complex, a complex class required to maintain the transcriptionally repressive state of many genes, including Hox genes, throughout development. PcG PRC1 complex acts via chromatin remodeling and modification of histones; it mediates monoubiquitination of histone H2A 'Lys-119', rendering chromatin heritably changed in its expressibility. The complex composed of RNF2, UB2D3 and BMI1 binds nucleosomes, and has activity only with nucleosomal histone H2A. In the PRC1-like complex, regulates the E3 ubiquitin-protein ligase activity of RNF2/RING2. This is Polycomb complex protein BMI-1 (BMI1) from Bos taurus (Bovine).